The chain runs to 227 residues: Probable septum site-determining protein MinC (227 aa).

This sequence belongs to the MinC family. Interacts with MinD and FtsZ.

Cell division inhibitor that blocks the formation of polar Z ring septums. Rapidly oscillates between the poles of the cell to destabilize FtsZ filaments that have formed before they mature into polar Z rings. Prevents FtsZ polymerization. The sequence is that of Probable septum site-determining protein MinC from Clostridioides difficile (strain 630) (Peptoclostridium difficile).